The chain runs to 278 residues: Ribosomal RNA small subunit methyltransferase A (278 aa).

S-adenosyl-L-methionine-binding residues include N28, L30, G55, E77, D103, and N122.

It belongs to the class I-like SAM-binding methyltransferase superfamily. rRNA adenine N(6)-methyltransferase family. RsmA subfamily.

Its subcellular location is the cytoplasm. The catalysed reaction is adenosine(1518)/adenosine(1519) in 16S rRNA + 4 S-adenosyl-L-methionine = N(6)-dimethyladenosine(1518)/N(6)-dimethyladenosine(1519) in 16S rRNA + 4 S-adenosyl-L-homocysteine + 4 H(+). Specifically dimethylates two adjacent adenosines (A1518 and A1519) in the loop of a conserved hairpin near the 3'-end of 16S rRNA in the 30S particle. May play a critical role in biogenesis of 30S subunits. The polypeptide is Ribosomal RNA small subunit methyltransferase A (Cereibacter sphaeroides (strain ATCC 17023 / DSM 158 / JCM 6121 / CCUG 31486 / LMG 2827 / NBRC 12203 / NCIMB 8253 / ATH 2.4.1.) (Rhodobacter sphaeroides)).